The following is a 491-amino-acid chain: Nucleoside transporter 1.1 (491 aa).

6 consecutive transmembrane segments (helical) span residues 27 to 47 (FYVY…VNAV), 82 to 102 (YNLI…LSWF), 109 to 129 (VRLL…MVVP), 136 to 156 (AGAV…KSIF), 173 to 193 (STMM…QIIV), and 209 to 229 (KIYY…LILL). The span at 260 to 273 (CHTDEHPTHDKEGR) shows a compositional bias: basic and acidic residues. 2 disordered regions span residues 260 to 280 (CHTD…SGKE) and 290 to 309 (AAAK…PHEV). The N-linked (GlcNAc...) asparagine glycan is linked to asparagine 274. 5 consecutive transmembrane segments (helical) span residues 333-353 (MFVA…GIAV), 361-381 (WFST…RFSP), 395-415 (WIIV…LLHS), 427-447 (VMEV…LVLG), and 460-480 (FVAG…GTVL).

This sequence belongs to the SLC29A/ENT transporter (TC 2.A.57) family.

The protein resides in the membrane. The catalysed reaction is adenosine(in) + H(+)(in) = adenosine(out) + H(+)(out). The enzyme catalyses uridine(in) + H(+)(in) = uridine(out) + H(+)(out). In terms of biological role, sodium-independent high affinity nucleoside:H(+) symporter; transports adenosine and uridine. Can transport cytidine and thymidine. The sequence is that of Nucleoside transporter 1.1 from Leishmania donovani.